Here is a 351-residue protein sequence, read N- to C-terminus: UDP-N-acetylenolpyruvoylglucosamine reductase (351 aa).

In terms of domain architecture, FAD-binding PCMH-type spans 25 to 196; it reads HIQAQARWLL…TAVEFRLPLL (172 aa). R173 is an active-site residue. The active-site Proton donor is S246. E343 is a catalytic residue.

The protein belongs to the MurB family. FAD is required as a cofactor.

The protein resides in the cytoplasm. The enzyme catalyses UDP-N-acetyl-alpha-D-muramate + NADP(+) = UDP-N-acetyl-3-O-(1-carboxyvinyl)-alpha-D-glucosamine + NADPH + H(+). Its pathway is cell wall biogenesis; peptidoglycan biosynthesis. In terms of biological role, cell wall formation. In Xylella fastidiosa (strain M23), this protein is UDP-N-acetylenolpyruvoylglucosamine reductase.